A 225-amino-acid chain; its full sequence is Small ribosomal subunit protein mS26 (225 aa).

Belongs to the mitochondrion-specific ribosomal protein mS26 family. In terms of assembly, component of the mitochondrial ribosome small subunit (28S) which comprises a 12S rRNA and about 30 distinct proteins.

It is found in the mitochondrion. The protein is Small ribosomal subunit protein mS26 (mRpS26) of Drosophila melanogaster (Fruit fly).